Here is a 311-residue protein sequence, read N- to C-terminus: 4-hydroxy-tetrahydrodipicolinate synthase (311 aa).

Thr49 contacts pyruvate. Tyr138 serves as the catalytic Proton donor/acceptor. Lys166 functions as the Schiff-base intermediate with substrate in the catalytic mechanism. Pyruvate is bound at residue Val207.

It belongs to the DapA family. As to quaternary structure, homotetramer; dimer of dimers.

The protein resides in the cytoplasm. The catalysed reaction is L-aspartate 4-semialdehyde + pyruvate = (2S,4S)-4-hydroxy-2,3,4,5-tetrahydrodipicolinate + H2O + H(+). The protein operates within amino-acid biosynthesis; L-lysine biosynthesis via DAP pathway; (S)-tetrahydrodipicolinate from L-aspartate: step 3/4. In terms of biological role, catalyzes the condensation of (S)-aspartate-beta-semialdehyde [(S)-ASA] and pyruvate to 4-hydroxy-tetrahydrodipicolinate (HTPA). This Lactobacillus helveticus (strain DPC 4571) protein is 4-hydroxy-tetrahydrodipicolinate synthase.